Consider the following 345-residue polypeptide: Uroporphyrinogen decarboxylase (345 aa).

Residues 27-31 (RQAGR), phenylalanine 46, aspartate 76, tyrosine 152, serine 207, and histidine 321 contribute to the substrate site.

It belongs to the uroporphyrinogen decarboxylase family. In terms of assembly, homodimer.

The protein resides in the cytoplasm. The enzyme catalyses uroporphyrinogen III + 4 H(+) = coproporphyrinogen III + 4 CO2. It participates in porphyrin-containing compound metabolism; protoporphyrin-IX biosynthesis; coproporphyrinogen-III from 5-aminolevulinate: step 4/4. In terms of biological role, catalyzes the decarboxylation of four acetate groups of uroporphyrinogen-III to yield coproporphyrinogen-III. In Staphylococcus aureus (strain USA300 / TCH1516), this protein is Uroporphyrinogen decarboxylase.